The chain runs to 142 residues: UPF0102 protein Bcen2424_0290 (142 aa).

Over residues 1-19 (MCHAAPARPEGARGRPPSG) the composition is skewed to low complexity. A disordered region spans residues 1–27 (MCHAAPARPEGARGRPPSGDNFSGAAR).

Belongs to the UPF0102 family.

This chain is UPF0102 protein Bcen2424_0290, found in Burkholderia cenocepacia (strain HI2424).